Consider the following 87-residue polypeptide: Spermatid-specific protein S1 (87 aa).

A disordered region spans residues 1–36 (TKSRYRNRRSRPRRRYGRRMRKTRCRRKGRRISRRP).

Its subcellular location is the nucleus. It is found in the chromosome. Involved in nuclear basic protein transition: histones are replaced by spermatid specific proteins which are themselves replaced by protamines in late spermatids. The sequence is that of Spermatid-specific protein S1 from Scyliorhinus canicula (Small-spotted catshark).